A 650-amino-acid chain; its full sequence is 1-deoxy-D-xylulose-5-phosphate synthase 2 (650 aa).

Thiamine diphosphate contacts are provided by residues His79 and 120-122; that span reads AHS. Asp151 contacts Mg(2+). Thiamine diphosphate-binding positions include 152–153, Asn180, Tyr289, and Glu371; that span reads GS. Position 180 (Asn180) interacts with Mg(2+).

The protein belongs to the transketolase family. DXPS subfamily. In terms of assembly, homodimer. It depends on Mg(2+) as a cofactor. Requires thiamine diphosphate as cofactor.

The catalysed reaction is D-glyceraldehyde 3-phosphate + pyruvate + H(+) = 1-deoxy-D-xylulose 5-phosphate + CO2. The protein operates within metabolic intermediate biosynthesis; 1-deoxy-D-xylulose 5-phosphate biosynthesis; 1-deoxy-D-xylulose 5-phosphate from D-glyceraldehyde 3-phosphate and pyruvate: step 1/1. Catalyzes the acyloin condensation reaction between C atoms 2 and 3 of pyruvate and glyceraldehyde 3-phosphate to yield 1-deoxy-D-xylulose-5-phosphate (DXP). In Zymomonas mobilis subsp. mobilis (strain ATCC 31821 / ZM4 / CP4), this protein is 1-deoxy-D-xylulose-5-phosphate synthase 2.